A 146-amino-acid chain; its full sequence is Putative pre-16S rRNA nuclease (146 aa).

Belongs to the YqgF nuclease family.

It is found in the cytoplasm. Its function is as follows. Could be a nuclease involved in processing of the 5'-end of pre-16S rRNA. In Pediococcus pentosaceus (strain ATCC 25745 / CCUG 21536 / LMG 10740 / 183-1w), this protein is Putative pre-16S rRNA nuclease.